We begin with the raw amino-acid sequence, 2623 residues long: Probable polyketide synthase 31 (2623 aa).

The segment covering 1-11 (MTQNIDNNNNK) has biased composition (low complexity). The interval 1–25 (MTQNIDNNNNKLIRDRNDDDDVDRN) is disordered. Residues 27–461 (DGDVAVIGIG…GSNVCLILSE (435 aa)) enclose the Ketosynthase family 3 (KS3) domain. Residues Cys-199, His-338, and His-384 each act as for beta-ketoacyl synthase activity in the active site. Residues 666–699 (GVSADIIIGHSLGEVSSPYCSGMIDFQTLCYLIY) form an acyl/malonyl transferase region. The active-site For acyl/malonyl transferase activity is the Ser-676. An N-terminal hotdog fold region spans residues 959 to 1088 (HEKIKSEGPS…GNFNLTKHNS (130 aa)). The 309-residue stretch at 959-1267 (HEKIKSEGPS…CALVSLGSNP (309 aa)) folds into the PKS/mFAS DH domain. His-1000 functions as the Proton acceptor; for dehydratase activity in the catalytic mechanism. Positions 1105 to 1267 (NFTSISKQDF…CALVSLGSNP (163 aa)) are C-terminal hotdog fold. Catalysis depends on Asp-1177, which acts as the Proton donor; for dehydratase activity. Residues 2524 to 2601 (ANNEIIHSTI…QSIEIIKSAK (78 aa)) enclose the Carrier domain. Ser-2561 is modified (O-(pantetheine 4'-phosphoryl)serine). The interval 2600–2623 (AKNNNKNNNNNNNKNNSNNKNKNN) is disordered. Residues 2601-2623 (KNNNKNNNNNNNKNNSNNKNKNN) are compositionally biased toward low complexity.

Pantetheine 4'-phosphate is required as a cofactor.

Functionally, probable polyketide synthase. In Dictyostelium discoideum (Social amoeba), this protein is Probable polyketide synthase 31 (pks31).